The sequence spans 60 residues: Mastoparan-VB2 (60 aa).

An N-terminal signal peptide occupies residues 1 to 27; the sequence is MKNTILLLFTAFIFLMGFFGMSADALA. AXPX repeat units lie at residues 27–30, 31–34, 35–38, and 41–44; these read ADPK, ADPL, AGPF, and ADPD. Residues 28–45 constitute a propeptide that is removed on maturation; that stretch reads DPKADPLAGPFPDADPDP. Position 59 is a leucine amide (Leu59).

It belongs to the MCD family. Mastoparan subfamily. As to expression, expressed by the venom gland.

The protein localises to the secreted. It is found in the target cell membrane. Functionally, antimicrobial peptide. Shows activity against both Gram-positive and -negative bacteria, as well against fungi. Also promotes moderate mast cell degranulation. Does not show hemolytic activity on rabbit and human erythrocytes. Its mast cell degranulation activity may be related to the activation of G-protein coupled receptors in mast cells as well as interaction with other proteins located in cell endosomal membranes in the mast cells. The protein is Mastoparan-VB2 of Vespa bicolor (Black shield wasp).